The primary structure comprises 753 residues: 5-methyltetrahydropteroyltriglutamate--homocysteine methyltransferase (753 aa).

5-methyltetrahydropteroyltri-L-glutamate is bound by residues 17–20 (RELK) and lysine 117. L-homocysteine is bound by residues 431–433 (IGS) and glutamate 484. L-methionine-binding positions include 431 to 433 (IGS) and glutamate 484. 5-methyltetrahydropteroyltri-L-glutamate is bound by residues 515 to 516 (RC) and tryptophan 561. L-homocysteine is bound at residue aspartate 599. Aspartate 599 provides a ligand contact to L-methionine. Glutamate 605 provides a ligand contact to 5-methyltetrahydropteroyltri-L-glutamate. Positions 641, 643, and 665 each coordinate Zn(2+). Histidine 694 acts as the Proton donor in catalysis. Cysteine 726 provides a ligand contact to Zn(2+).

This sequence belongs to the vitamin-B12 independent methionine synthase family. Requires Zn(2+) as cofactor.

The catalysed reaction is 5-methyltetrahydropteroyltri-L-glutamate + L-homocysteine = tetrahydropteroyltri-L-glutamate + L-methionine. Its pathway is amino-acid biosynthesis; L-methionine biosynthesis via de novo pathway; L-methionine from L-homocysteine (MetE route): step 1/1. Functionally, catalyzes the transfer of a methyl group from 5-methyltetrahydrofolate to homocysteine resulting in methionine formation. This is 5-methyltetrahydropteroyltriglutamate--homocysteine methyltransferase from Shigella dysenteriae serotype 1 (strain Sd197).